We begin with the raw amino-acid sequence, 559 residues long: Coiled-coil domain-containing protein 63 (559 aa).

Coiled coils occupy residues 14–70 (ELSE…QAET), 185–261 (EKAA…KLKS), and 364–414 (QQQS…VEKL).

Its function is as follows. Plays a role in spermiogenesis. Involved in the elongation of flagella and the formation of sperm heads. The protein is Coiled-coil domain-containing protein 63 of Rattus norvegicus (Rat).